Consider the following 1838-residue polypeptide: Nuclear pore complex protein NUP205 (1838 aa).

This sequence belongs to the NUP186/NUP192/NUP205 family. In terms of assembly, part of the nuclear pore complex (NPC). The NPC has an eight-fold symmetrical structure comprising a central transport channel and two rings, the cytoplasmic and nuclear rings, to which eight filaments are attached. The cytoplasmic filaments have loose ends, while the nuclear filaments are joined in a distal ring, forming a nuclear basket. NPCs are highly dynamic in configuration and composition, and can be devided in 3 subcomplexes, the NUP62 subcomplex, the NUP107-160 subcomplex and the NUP93 subcomplex, containing approximately 30 different nucleoporin proteins.

The protein resides in the nucleus envelope. It localises to the nucleus. The protein localises to the nuclear pore complex. This Arabidopsis thaliana (Mouse-ear cress) protein is Nuclear pore complex protein NUP205.